The sequence spans 706 residues: Probable N(6)-adenosine-methyltransferase MT-A70-like (706 aa).

Disordered stretches follow at residues 64 to 114 (RPFV…VAAA) and 223 to 261 (TLPL…PDMW). Over residues 103–114 (SPGSSPASVAAA) the composition is skewed to low complexity. Positions 227–236 (LQPPPAPQMP) are enriched in pro residues. S-adenosyl-L-methionine contacts are provided by residues 479 to 480 (DI) and Asp497. Positions 567–580 (RIIRTGRTGHWLNH) are positively charged region required for RNA-binding. S-adenosyl-L-methionine-binding positions include Lys614, 637 to 640 (RMHN), and 650 to 651 (NQ). Residues 669–706 (AYPDSEVQPPSPPRASAPIDGDQGTSQKPTVSDGERPA) are disordered.

It belongs to the MT-A70-like family.

It is found in the nucleus. The enzyme catalyses an adenosine in mRNA + S-adenosyl-L-methionine = an N(6)-methyladenosine in mRNA + S-adenosyl-L-homocysteine + H(+). Its function is as follows. Probable N6-methyltransferase that methylates adenosine residues of some mRNAs. N6-methyladenosine (m6A), which is present at internal sites of some mRNAs, may play a role in the efficiency of mRNA splicing, transport or translation. This Oryza sativa subsp. japonica (Rice) protein is Probable N(6)-adenosine-methyltransferase MT-A70-like.